The chain runs to 2477 residues: Spectrin alpha chain, non-erythrocytic 1 (2477 aa).

The segment at 1-14 (MDPSGVKVLETAED) is N-terminal domain. Spectrin repeat units follow at residues 45–146 (RFQF…VKLL), 150–251 (KLVQ…QGKL), 256–358 (EVQR…ARLN), 361–465 (YRLQ…QYEQ), 468–570 (DLQL…AQLA), 574–676 (HLQQ…KLRE), 679–781 (QQQQ…QKLA), 785–888 (RLQQ…DLED), 891–969 (QAQQ…ETGK), and 1096–1162 (LFRE…SEGL). Positions 967–1026 (TGKELVLALYDYQEKSPREVTMKKGDILTLLNSTNKDWWKVEVNDRQGFVPAAYVKKLDP) constitute an SH3 domain. Tyr-1176 is subject to Phosphotyrosine. 10 Spectrin repeats span residues 1234 to 1336 (EVQR…EKLG), 1339 to 1442 (HDLQ…MMLD), 1446 to 1549 (ELQL…KLGE), 1552 to 1661 (TLQQ…KLKE), 1664 to 1767 (KQQN…KLNE), 1769 to 1873 (HRLH…RLEE), 1876 to 1979 (EYQQ…KLDE), 1983 to 2086 (FLQF…KLLE), 2097 to 2199 (LFLT…LELQ), and 2211 to 2315 (LRQE…NLEQ). A C-terminal domain region spans residues 2257 to 2477 (HQEIRAMRSQ…IEFTRSLFVN (221 aa)). EF-hand domains lie at 2328–2363 (EALK…LGYD), 2371–2406 (EPDP…RETE), and 2409–2444 (KSSE…EQAD). Residues Asp-2341, Asp-2343, Ser-2345, Arg-2347, Glu-2352, Asp-2384, Asn-2386, Asp-2388, His-2390, and Glu-2395 each contribute to the Ca(2+) site.

It belongs to the spectrin family. In terms of assembly, like erythrocyte spectrin, the spectrin-like proteins are capable of forming dimers which can further associate to tetramers. Interacts with ACP1. Post-translationally, phosphorylation of Tyr-1176 decreases sensitivity to cleavage by calpain in vitro.

Its subcellular location is the cytoplasm. It localises to the cytoskeleton. The protein resides in the cell cortex. Functionally, morphologically, spectrin-like proteins appear to be related to spectrin, showing a flexible rod-like structure. They can bind actin but seem to differ in their calmodulin-binding activity. In nonerythroid tissues, spectrins, in association with some other proteins, may play an important role in membrane organization. The protein is Spectrin alpha chain, non-erythrocytic 1 (SPTAN1) of Gallus gallus (Chicken).